Here is a 249-residue protein sequence, read N- to C-terminus: Proteasome subunit alpha 2 (249 aa).

Methionine 1 carries the post-translational modification N-acetylmethionine.

The protein belongs to the peptidase T1A family. The 20S proteasome core is composed of 14 alpha and 14 beta subunits that assemble into four stacked heptameric rings, resulting in a barrel-shaped structure. The two inner rings, each composed of seven catalytic beta subunits, are sandwiched by two outer rings, each composed of seven alpha subunits. H.volcanii produces at least 2 types of 20S proteasomes: an alpha1-beta proteasome and a proteasome containing all three subunits (alpha1, alpha2, and beta) that appears to be asymmetrical with homo-oligomeric alpha1 and alpha2 rings positioned on separate ends. The catalytic chamber with the active sites is on the inside of the barrel. Has probably a gated structure, the ends of the cylinder being occluded by the N-termini of the alpha-subunits. Is likely capped at one or both ends by the proteasome regulatory ATPase, PAN.

It localises to the cytoplasm. The formation of the proteasomal ATPase PAN-20S proteasome complex, via the docking of the C-termini of PAN into the intersubunit pockets in the alpha-rings, triggers opening of the gate for substrate entry. Interconversion between the open-gate and close-gate conformations leads to a dynamic regulation of the 20S proteasome proteolysis activity. Functionally, component of the proteasome core, a large protease complex with broad specificity involved in protein degradation. The H.volcanii alpha1-beta-alpha2 proteasome is able to cleave oligopeptides after Tyr and thus displays chymotrypsin-like activity. The sequence is that of Proteasome subunit alpha 2 from Haloferax volcanii (strain ATCC 29605 / DSM 3757 / JCM 8879 / NBRC 14742 / NCIMB 2012 / VKM B-1768 / DS2) (Halobacterium volcanii).